A 1392-amino-acid chain; its full sequence is ATP-dependent helicase/nuclease subunit A (1392 aa).

A UvrD-like helicase ATP-binding domain is found at 3–489 (NPKWTPAQQA…IDLNQNFRSR (487 aa)). Position 24–31 (24–31 (AAAGSGKT)) interacts with ATP. Disordered regions lie at residues 291-319 (RGSK…KARD), 556-594 (RGAE…LEEA), and 1051-1126 (GPVQ…LDTK). Basic and acidic residues-rich tracts occupy residues 305 to 319 (ENSK…KARD) and 569 to 583 (AKGE…REPE). Residues 556 to 886 (RGAEDAATGA…RFITVHSSKG (331 aa)) form the UvrD-like helicase C-terminal domain. A compositionally biased stretch (acidic residues) spans 584–594 (SGDDESSLEEA). Positions 1088-1113 (ASGKTEIPGETKNSEETKTSEDKKNL) are enriched in basic and acidic residues.

It belongs to the helicase family. AddA subfamily. As to quaternary structure, heterodimer of AddA and AddB/RexB. Mg(2+) is required as a cofactor.

It carries out the reaction Couples ATP hydrolysis with the unwinding of duplex DNA by translocating in the 3'-5' direction.. The enzyme catalyses ATP + H2O = ADP + phosphate + H(+). The heterodimer acts as both an ATP-dependent DNA helicase and an ATP-dependent, dual-direction single-stranded exonuclease. Recognizes the chi site generating a DNA molecule suitable for the initiation of homologous recombination. The AddA nuclease domain is required for chi fragment generation; this subunit has the helicase and 3' -&gt; 5' nuclease activities. The sequence is that of ATP-dependent helicase/nuclease subunit A from Desulfitobacterium hafniense (strain Y51).